The primary structure comprises 145 residues: MSSFSTQTPYPNLAVPFFTSIPNGLYPSKSIVISGVVLSDAKRFQINLRCGGDIAFHLNPRFDENAVVRNTQINNSWGPEERSLPGSMPFSRGQRFSVWILCEGHCFKVAVDGQHICEYSHRLMNLPDINTLEVAGDIQLTHVET.

An N-acetylserine modification is found at serine 2. A Galectin domain is found at 17–145; it reads FFTSIPNGLY…GDIQLTHVET (129 aa). 77–83 provides a ligand contact to a beta-D-galactoside; that stretch reads WGPEERS.

Monomer. As to expression, erythrocytes.

May function in erythrocyte differentiation. The sequence is that of Galectin-5 (Lgals5) from Rattus norvegicus (Rat).